We begin with the raw amino-acid sequence, 367 residues long: Glutamate 5-kinase (367 aa).

Lys10 contributes to the ATP binding site. Ser50, Asp137, and Asn149 together coordinate substrate. Residues 169 to 170 (TD) and 211 to 217 (TGGMSTK) contribute to the ATP site. Positions 275-353 (AGEITVDEGA…QQIDAILGYE (79 aa)) constitute a PUA domain.

It belongs to the glutamate 5-kinase family.

It localises to the cytoplasm. It catalyses the reaction L-glutamate + ATP = L-glutamyl 5-phosphate + ADP. It functions in the pathway amino-acid biosynthesis; L-proline biosynthesis; L-glutamate 5-semialdehyde from L-glutamate: step 1/2. Its function is as follows. Catalyzes the transfer of a phosphate group to glutamate to form L-glutamate 5-phosphate. The chain is Glutamate 5-kinase from Salmonella agona (strain SL483).